Reading from the N-terminus, the 894-residue chain is Microsomal triglyceride transfer protein large subunit (894 aa).

An N-terminal signal peptide occupies residues 1–18 (MILLAVLFLCFISSYSAS). The Vitellogenin domain occupies 28-662 (LNNDRLYKLK…YVGKTPLHAI (635 aa)). Residues cysteine 174 and cysteine 194 are joined by a disulfide bond.

As to quaternary structure, heterodimer; heterodimerizes with the protein disulfide isomerase (P4HB/PDI). Interacts with APOB. Interacts with PRAP1.

Its subcellular location is the endoplasmic reticulum. The protein resides in the golgi apparatus. The catalysed reaction is a 1,2-diacyl-sn-glycero-3-phosphocholine(in) = a 1,2-diacyl-sn-glycero-3-phosphocholine(out). The enzyme catalyses a 1,2-diacyl-sn-glycero-3-phosphoethanolamine(in) = a 1,2-diacyl-sn-glycero-3-phosphoethanolamine(out). It carries out the reaction a cholesterol ester(in) = a cholesterol ester(out). It catalyses the reaction a triacyl-sn-glycerol(in) = a triacyl-sn-glycerol(out). Its function is as follows. Catalyzes the transport of triglyceride, cholesteryl ester, and phospholipid between phospholipid surfaces. Required for the assembly and secretion of plasma lipoproteins that contain apolipoprotein B. May be involved in regulating cholesteryl ester biosynthesis in cells that produce lipoproteins. This is Microsomal triglyceride transfer protein large subunit (MTTP) from Sus scrofa (Pig).